Consider the following 189-residue polypeptide: Fucolectin-5 (189 aa).

A signal peptide spans 1 to 31 (MKTCNLTDRMKVKMIMLLFQILAISTLQSDS). Residues 40-189 (QENVAVRGKA…VEVNALLPAN (150 aa)) form an F5/8 type C-like region. Ca(2+) is bound by residues Asp70, Asn72, and Ser81. 3 disulfides stabilise this stretch: Cys82-Cys178, Cys114-Cys115, and Cys140-Cys156. Positions 84 and 111 each coordinate alpha-L-fucose. Residues 111-113 (RGD) carry the Cell attachment site motif. Arg118 is a binding site for alpha-L-fucose. 2 residues coordinate Ca(2+): Cys178 and Glu179.

Belongs to the fucolectin family. In terms of assembly, homotrimer. Gill mucous cells.

The protein localises to the secreted. In terms of biological role, acts as a defensive agent. Recognizes blood group fucosylated oligosaccharides including A, B, H and Lewis B-type antigens. Does not recognize Lewis A antigen and has low affinity for monovalent haptens. The chain is Fucolectin-5 from Anguilla japonica (Japanese eel).